Reading from the N-terminus, the 512-residue chain is Histidine ammonia-lyase (512 aa).

A cross-link (5-imidazolinone (Ala-Gly)) is located at residues alanine 142–glycine 144. Serine 143 is subject to 2,3-didehydroalanine (Ser).

Belongs to the PAL/histidase family. Contains an active site 4-methylidene-imidazol-5-one (MIO), which is formed autocatalytically by cyclization and dehydration of residues Ala-Ser-Gly.

The protein resides in the cytoplasm. It catalyses the reaction L-histidine = trans-urocanate + NH4(+). It functions in the pathway amino-acid degradation; L-histidine degradation into L-glutamate; N-formimidoyl-L-glutamate from L-histidine: step 1/3. The polypeptide is Histidine ammonia-lyase (Allorhizobium ampelinum (strain ATCC BAA-846 / DSM 112012 / S4) (Agrobacterium vitis (strain S4))).